Consider the following 805-residue polypeptide: FAD-dependent monooxygenase verC1 (805 aa).

Residues 1 to 20 (MTFRVIIVGGGVAGLTLASA) form the signal peptide. FAD is bound by residues Glu-32, Ala-46, and Arg-107. An N-linked (GlcNAc...) asparagine glycan is attached at Asn-132. Residue Tyr-214 is part of the active site. Residues Asp-306 and Ala-319 each contribute to the FAD site. 7 helical membrane passes run 551 to 571 (ALTM…AGLG), 604 to 624 (IAVL…AFFW), 632 to 652 (SWLF…YLFS), 671 to 691 (LPVI…FWMW), 703 to 723 (VFFP…VCAI), 726 to 746 (WDML…IWDL), and 761 to 781 (IYGV…LGWL).

Belongs to the paxM FAD-dependent monooxygenase family.

It localises to the membrane. Its pathway is secondary metabolite biosynthesis; terpenoid biosynthesis. It functions in the pathway mycotoxin biosynthesis. In terms of biological role, FAD-dependent monooxygenase; part of the gene cluster that mediates the biosynthesis of the neurotoxin verrucosidin, a methylated alpha-pyrone polyketide that inhibits oxidative phosphorylation in mitochondria and thereby causes neurological diseases. The carbon backbone of verrucosidin is synthesized by the HR-PKS verA, and further modified by the other verrucodidin cluster enzymes. The sequence is that of FAD-dependent monooxygenase verC1 from Penicillium polonicum.